A 129-amino-acid chain; its full sequence is Phosphoribosyl-AMP cyclohydrolase (129 aa).

Asp85 lines the Mg(2+) pocket. Residue Cys86 coordinates Zn(2+). Mg(2+) contacts are provided by Asp87 and Asp89. Positions 102 and 109 each coordinate Zn(2+).

It belongs to the PRA-CH family. In terms of assembly, homodimer. Mg(2+) is required as a cofactor. Requires Zn(2+) as cofactor.

Its subcellular location is the cytoplasm. It catalyses the reaction 1-(5-phospho-beta-D-ribosyl)-5'-AMP + H2O = 1-(5-phospho-beta-D-ribosyl)-5-[(5-phospho-beta-D-ribosylamino)methylideneamino]imidazole-4-carboxamide. It functions in the pathway amino-acid biosynthesis; L-histidine biosynthesis; L-histidine from 5-phospho-alpha-D-ribose 1-diphosphate: step 3/9. Catalyzes the hydrolysis of the adenine ring of phosphoribosyl-AMP. The sequence is that of Phosphoribosyl-AMP cyclohydrolase from Methanococcus maripaludis (strain C7 / ATCC BAA-1331).